The following is a 429-amino-acid chain: Histidine--tRNA ligase (429 aa).

Belongs to the class-II aminoacyl-tRNA synthetase family. As to quaternary structure, homodimer.

The protein resides in the cytoplasm. It catalyses the reaction tRNA(His) + L-histidine + ATP = L-histidyl-tRNA(His) + AMP + diphosphate + H(+). The sequence is that of Histidine--tRNA ligase from Rippkaea orientalis (strain PCC 8801 / RF-1) (Cyanothece sp. (strain PCC 8801)).